A 609-amino-acid polypeptide reads, in one-letter code: Glutamine--fructose-6-phosphate aminotransferase [isomerizing] (609 aa).

Catalysis depends on Cys-2, which acts as the Nucleophile; for GATase activity. Positions 2–218 (CGIVGAIAQR…EGDIAEITRR (217 aa)) constitute a Glutamine amidotransferase type-2 domain. SIS domains follow at residues 286–426 (ADEL…LKGL) and 458–599 (LAED…VDQP). The active-site For Fru-6P isomerization activity is the Lys-604.

In terms of assembly, homodimer.

It is found in the cytoplasm. It carries out the reaction D-fructose 6-phosphate + L-glutamine = D-glucosamine 6-phosphate + L-glutamate. Catalyzes the first step in hexosamine metabolism, converting fructose-6P into glucosamine-6P using glutamine as a nitrogen source. This Salmonella typhimurium (strain LT2 / SGSC1412 / ATCC 700720) protein is Glutamine--fructose-6-phosphate aminotransferase [isomerizing].